The primary structure comprises 184 residues: Peptide deformylase (184 aa).

Residues Cys111 and His154 each contribute to the Fe cation site. The active site involves Glu155. A Fe cation-binding site is contributed by His158.

The protein belongs to the polypeptide deformylase family. Fe(2+) serves as cofactor.

It carries out the reaction N-terminal N-formyl-L-methionyl-[peptide] + H2O = N-terminal L-methionyl-[peptide] + formate. Removes the formyl group from the N-terminal Met of newly synthesized proteins. Requires at least a dipeptide for an efficient rate of reaction. N-terminal L-methionine is a prerequisite for activity but the enzyme has broad specificity at other positions. This chain is Peptide deformylase, found in Lactobacillus delbrueckii subsp. bulgaricus (strain ATCC 11842 / DSM 20081 / BCRC 10696 / JCM 1002 / NBRC 13953 / NCIMB 11778 / NCTC 12712 / WDCM 00102 / Lb 14).